Consider the following 418-residue polypeptide: tRNA-2-methylthio-N(6)-dimethylallyladenosine synthase (418 aa).

An MTTase N-terminal domain is found at 2–118 (PGYYLWTIGC…WREIPEGFIL (117 aa)). [4Fe-4S] cluster is bound by residues Cys-11, Cys-47, Cys-81, Cys-134, Cys-138, and Cys-141. One can recognise a Radical SAM core domain in the interval 120-351 (LRPPVSANVT…EDLQKETVGK (232 aa)). The TRAM domain maps to 346–414 (KETVGKANAA…PWSLQAKLVN (69 aa)).

Belongs to the methylthiotransferase family. MiaB subfamily. In terms of assembly, monomer. The cofactor is [4Fe-4S] cluster.

The protein resides in the cytoplasm. The enzyme catalyses N(6)-dimethylallyladenosine(37) in tRNA + (sulfur carrier)-SH + AH2 + 2 S-adenosyl-L-methionine = 2-methylsulfanyl-N(6)-dimethylallyladenosine(37) in tRNA + (sulfur carrier)-H + 5'-deoxyadenosine + L-methionine + A + S-adenosyl-L-homocysteine + 2 H(+). In terms of biological role, catalyzes the methylthiolation of N6-(dimethylallyl)adenosine (i(6)A), leading to the formation of 2-methylthio-N6-(dimethylallyl)adenosine (ms(2)i(6)A) at position 37 in tRNAs that read codons beginning with uridine. This Dehalococcoides mccartyi (strain ATCC BAA-2100 / JCM 16839 / KCTC 5957 / BAV1) protein is tRNA-2-methylthio-N(6)-dimethylallyladenosine synthase.